A 564-amino-acid polypeptide reads, in one-letter code: Dihydroxy-acid dehydratase (564 aa).

C55 lines the [2Fe-2S] cluster pocket. Residue D87 participates in Mg(2+) binding. Position 128 (C128) interacts with [2Fe-2S] cluster. Residues D129 and K130 each contribute to the Mg(2+) site. K130 is subject to N6-carboxylysine. C200 contributes to the [2Fe-2S] cluster binding site. E452 serves as a coordination point for Mg(2+). S478 (proton acceptor) is an active-site residue.

It belongs to the IlvD/Edd family. As to quaternary structure, homodimer. It depends on [2Fe-2S] cluster as a cofactor. Requires Mg(2+) as cofactor.

The enzyme catalyses (2R)-2,3-dihydroxy-3-methylbutanoate = 3-methyl-2-oxobutanoate + H2O. The catalysed reaction is (2R,3R)-2,3-dihydroxy-3-methylpentanoate = (S)-3-methyl-2-oxopentanoate + H2O. Its pathway is amino-acid biosynthesis; L-isoleucine biosynthesis; L-isoleucine from 2-oxobutanoate: step 3/4. The protein operates within amino-acid biosynthesis; L-valine biosynthesis; L-valine from pyruvate: step 3/4. Its function is as follows. Functions in the biosynthesis of branched-chain amino acids. Catalyzes the dehydration of (2R,3R)-2,3-dihydroxy-3-methylpentanoate (2,3-dihydroxy-3-methylvalerate) into 2-oxo-3-methylpentanoate (2-oxo-3-methylvalerate) and of (2R)-2,3-dihydroxy-3-methylbutanoate (2,3-dihydroxyisovalerate) into 2-oxo-3-methylbutanoate (2-oxoisovalerate), the penultimate precursor to L-isoleucine and L-valine, respectively. The chain is Dihydroxy-acid dehydratase from Albidiferax ferrireducens (strain ATCC BAA-621 / DSM 15236 / T118) (Rhodoferax ferrireducens).